The primary structure comprises 52 residues: Large ribosomal subunit protein bL32c (52 aa).

It belongs to the bacterial ribosomal protein bL32 family.

It is found in the plastid. The protein resides in the chloroplast. The polypeptide is Large ribosomal subunit protein bL32c (Olimarabidopsis pumila (Dwarf rocket)).